The following is a 458-amino-acid chain: GDP-fucose protein O-fucosyltransferase 3 (458 aa).

Over 1–11 (MRRISVKKLCS) the chain is Cytoplasmic. A helical; Signal-anchor for type II membrane protein membrane pass occupies residues 12–32 (FCLCACAFAFLVMTFQVIELL). The Lumenal portion of the chain corresponds to 33–458 (GQFEQTEHRQ…TQFWREVFTD (426 aa)). Asn92, Asn150, and Asn300 each carry an N-linked (GlcNAc...) asparagine glycan. Cys371 and Cys374 are oxidised to a cystine. Residue Asn445 is glycosylated (N-linked (GlcNAc...) asparagine).

Belongs to the glycosyltransferase 10 family.

Its subcellular location is the endoplasmic reticulum membrane. It carries out the reaction L-threonyl-[protein] + GDP-beta-L-fucose = 3-O-(alpha-L-fucosyl)-L-threonyl-[protein] + GDP + H(+). The enzyme catalyses L-seryl-[protein] + GDP-beta-L-fucose = 3-O-(alpha-L-fucosyl)-L-seryl-[protein] + GDP + H(+). It participates in protein modification; protein glycosylation. In terms of biological role, protein O-fucosyltransferase that specifically catalyzes O-fucosylation of serine or threonine residues in EMI domains of target proteins. Attaches fucose through an O-glycosidic linkage. O-fucosylation of EMI domain-containing proteins may be required for facilitating protein folding and secretion. This Danio rerio (Zebrafish) protein is GDP-fucose protein O-fucosyltransferase 3 (fut10).